Consider the following 2188-residue polypeptide: Phenolphthiocerol/phthiocerol polyketide synthase subunit C (2188 aa).

Positions 34–462 (SEPIAVIGMG…GTNAHVVIEQ (429 aa)) constitute a Ketosynthase family 3 (KS3) domain. Catalysis depends on for beta-ketoacyl synthase activity residues C210, H345, and H384. Residues 572 to 890 (VFVYSGRGSQ…NLNTTHTTHP (319 aa)) are acyltransferase. The For malonyltransferase activity role is filled by S660. Residues 928-1050 (HPLLGVGVTD…ATVARAEPLA (123 aa)) form an N-terminal hotdog fold region. The interval 928–1093 (HPLLGVGVTD…QQHGPAFQGI (166 aa)) is dehydratase. In terms of domain architecture, PKS/mFAS DH spans 928–1223 (HPLLGVGVTD…MAVLGSGSGA (296 aa)). Catalysis depends on H959, which acts as the Proton acceptor; for dehydratase activity. Residues 1067 to 1223 (EDQLDPDDLY…MAVLGSGSGA (157 aa)) form a C-terminal hotdog fold region. The active-site Proton donor; for dehydratase activity is the D1129. An enoylreductase region spans residues 1467–1778 (GRLDALNVHE…SGKHTGKIVI (312 aa)). The tract at residues 1802-1981 (GGYLIVGGMG…GINWGPWADV (180 aa)) is beta-ketoacyl reductase. 1803–1848 (GYLIVGGMGGLGFVVARWLAEQGAGLIVLNGRSAPSDEVAAAIAEL) is a binding site for NADP(+). The region spanning 2069-2145 (ERPGHLASAI…DLATALCERM (77 aa)) is the Carrier domain. At S2105 the chain carries O-(pantetheine 4'-phosphoryl)serine.

In terms of assembly, homodimer. NADP(+) is required as a cofactor. Requires pantetheine 4'-phosphate as cofactor.

It carries out the reaction icosanoyl-[(phenol)carboxyphthiodiolenone synthase] + 2 (S)-methylmalonyl-CoA + 3 malonyl-CoA + 5 NADPH + 10 H(+) = C32-carboxyphthiodiolenone-[(phenol)carboxyphthiodiolenone synthase] + 5 CO2 + 5 NADP(+) + 5 CoA + 2 H2O. The enzyme catalyses docosanoyl-[(phenol)carboxyphthiodiolenone synthase] + 2 (S)-methylmalonyl-CoA + 3 malonyl-CoA + 5 NADPH + 10 H(+) = C34-carboxyphthiodiolenone-[(phenol)carboxyphthiodiolenone synthase] + 5 CO2 + 5 NADP(+) + 5 CoA + 2 H2O. It catalyses the reaction 17-(4-hydroxyphenyl)heptadecanoyl-[(phenol)carboxyphthiodiolenone synthase] + 2 (S)-methylmalonyl-CoA + 3 malonyl-CoA + 5 NADPH + 10 H(+) = C35-(phenol)carboxyphthiodiolenone-[(phenol)carboxyphthiodiolenone synthase] + 5 CO2 + 5 NADP(+) + 5 CoA + 2 H2O. The catalysed reaction is 19-(4-hydroxyphenyl)nonadecanoyl-[(phenol)carboxyphthiodiolenone synthase] + 2 (S)-methylmalonyl-CoA + 3 malonyl-CoA + 5 NADPH + 10 H(+) = C37-(phenol)carboxyphthiodiolenone-[(phenol)carboxyphthiodiolenone synthase] + 5 CO2 + 5 NADP(+) + 5 CoA + 2 H2O. It functions in the pathway lipid metabolism; fatty acid biosynthesis. In terms of biological role, part of the PpsABCDE complex involved in the biosynthesis of the lipid core common to phthiocerols and phenolphthiocerols by successive additions of malonyl-CoA or methylmalonyl-CoA extender units. PpsA can accept as substrate the activated forms of either icosanoyl (C20), docosanoyl (C22) or lignoceroyl (C24) groups from FadD26, or a (4-hydroxyphenyl)-C17 or (4-hydroxyphenyl)-C19 fatty acyl from FadD29. PpsA initiates the biosynthesis and extends its substrate using a malonyl-CoA extender unit. The PpsB and PpsC proteins add the second and third malonyl-CoA extender units. PpsD adds an (R)-methylmalonyl unit and PpsE adds a second (R)-methylmalonyl unit. The incorporation of the methylmalonyl units results in formation of two branched methyl groups in the elongated product. This is Phenolphthiocerol/phthiocerol polyketide synthase subunit C (ppsC) from Mycobacterium bovis (strain ATCC BAA-935 / AF2122/97).